The following is a 576-amino-acid chain: Proline--tRNA ligase (576 aa).

Belongs to the class-II aminoacyl-tRNA synthetase family. ProS type 1 subfamily. Homodimer.

It is found in the cytoplasm. The catalysed reaction is tRNA(Pro) + L-proline + ATP = L-prolyl-tRNA(Pro) + AMP + diphosphate. Its function is as follows. Catalyzes the attachment of proline to tRNA(Pro) in a two-step reaction: proline is first activated by ATP to form Pro-AMP and then transferred to the acceptor end of tRNA(Pro). As ProRS can inadvertently accommodate and process non-cognate amino acids such as alanine and cysteine, to avoid such errors it has two additional distinct editing activities against alanine. One activity is designated as 'pretransfer' editing and involves the tRNA(Pro)-independent hydrolysis of activated Ala-AMP. The other activity is designated 'posttransfer' editing and involves deacylation of mischarged Ala-tRNA(Pro). The misacylated Cys-tRNA(Pro) is not edited by ProRS. In Bordetella pertussis (strain Tohama I / ATCC BAA-589 / NCTC 13251), this protein is Proline--tRNA ligase.